A 256-amino-acid chain; its full sequence is Ribonuclease HII (256 aa).

The 184-residue stretch at 73–256 (KLIAGIDEAG…RVSFTKNFIV (184 aa)) folds into the RNase H type-2 domain. 3 residues coordinate a divalent metal cation: D79, E80, and D171.

This sequence belongs to the RNase HII family. The cofactor is Mn(2+). It depends on Mg(2+) as a cofactor.

It is found in the cytoplasm. The enzyme catalyses Endonucleolytic cleavage to 5'-phosphomonoester.. Endonuclease that specifically degrades the RNA of RNA-DNA hybrids. The chain is Ribonuclease HII from Acetivibrio thermocellus (strain ATCC 27405 / DSM 1237 / JCM 9322 / NBRC 103400 / NCIMB 10682 / NRRL B-4536 / VPI 7372) (Clostridium thermocellum).